The following is a 233-amino-acid chain: Glycerol-3-phosphate acyltransferase 5 (233 aa).

5 helical membrane-spanning segments follow: residues L3–L23, M69–F89, L116–F136, V143–I163, and T168–P188.

It belongs to the PlsY family. Probably interacts with PlsX.

The protein resides in the cell membrane. It carries out the reaction an acyl phosphate + sn-glycerol 3-phosphate = a 1-acyl-sn-glycero-3-phosphate + phosphate. The protein operates within lipid metabolism; phospholipid metabolism. Functionally, catalyzes the transfer of an acyl group from acyl-phosphate (acyl-PO(4)) to glycerol-3-phosphate (G3P) to form lysophosphatidic acid (LPA). This enzyme utilizes acyl-phosphate as fatty acyl donor, but not acyl-CoA or acyl-ACP. The polypeptide is Glycerol-3-phosphate acyltransferase 5 (Dehalococcoides mccartyi (strain ATCC BAA-2266 / KCTC 15142 / 195) (Dehalococcoides ethenogenes (strain 195))).